The primary structure comprises 392 residues: Lipase (392 aa).

The N-terminal stretch at 1-26 is a signal peptide; sequence MVSFISISQGVSLCLLVSSMMLGSSA. Residues 27 to 95 constitute a propeptide that is removed on maturation; sequence VPVSGKSGSS…GGNLTSIGKR (69 aa). Residues 50 to 69 are disordered; sequence PLISSRCAPPSNKGSKSDLQ. 3 disulfides stabilise this stretch: Cys152/Cys391, Cys163/Cys166, and Cys358/Cys367. Ser268 acts as the Nucleophile in catalysis. Asp327 functions as the Charge relay system in the catalytic mechanism. Asp379 contributes to the Ca(2+) binding site. His380 functions as the Charge relay system in the catalytic mechanism.

It belongs to the AB hydrolase superfamily. Lipase family.

The protein localises to the secreted. The protein resides in the extracellular space. The catalysed reaction is a triacylglycerol + H2O = a diacylglycerol + a fatty acid + H(+). Lipase activity is maximal at a lipid-water interface (interfacial activation), probably by an induced conformational change that results in an increased accessibility of the active site to the substrate. Its function is as follows. Hydrolyzes ester bonds of triglycerides as well as of their derived partial glycerides with a strong 1,3-positional specificity. In Rhizopus niveus, this protein is Lipase.